We begin with the raw amino-acid sequence, 160 residues long: Transcriptional repressor NrdR (160 aa).

Residues 1-11 show a composition bias toward polar residues; that stretch reads MRCPNCNSLDT. The interval 1–20 is disordered; sequence MRCPNCNSLDTQVKDSRPTE. The segment at 3–34 is a zinc-finger region; it reads CPNCNSLDTQVKDSRPTEDSSVIRRRRVCVAC. Residues 49–139 form the ATP-cone domain; that stretch reads LTVIKRNGRR…VYRNFREAKD (91 aa).

This sequence belongs to the NrdR family. The cofactor is Zn(2+).

Negatively regulates transcription of bacterial ribonucleotide reductase nrd genes and operons by binding to NrdR-boxes. In Bradyrhizobium diazoefficiens (strain JCM 10833 / BCRC 13528 / IAM 13628 / NBRC 14792 / USDA 110), this protein is Transcriptional repressor NrdR.